The sequence spans 185 residues: Dual-action ribosomal maturation protein DarP (185 aa).

It belongs to the DarP family.

Its subcellular location is the cytoplasm. Functionally, member of a network of 50S ribosomal subunit biogenesis factors which assembles along the 30S-50S interface, preventing incorrect 23S rRNA structures from forming. Promotes peptidyl transferase center (PTC) maturation. The sequence is that of Dual-action ribosomal maturation protein DarP from Vibrio vulnificus (strain YJ016).